Consider the following 174-residue polypeptide: Large ribosomal subunit protein uL10 (174 aa).

It belongs to the universal ribosomal protein uL10 family. Part of the ribosomal stalk of the 50S ribosomal subunit. The N-terminus interacts with L11 and the large rRNA to form the base of the stalk. The C-terminus forms an elongated spine to which L12 dimers bind in a sequential fashion forming a multimeric L10(L12)X complex.

Forms part of the ribosomal stalk, playing a central role in the interaction of the ribosome with GTP-bound translation factors. The protein is Large ribosomal subunit protein uL10 of Pelobacter propionicus (strain DSM 2379 / NBRC 103807 / OttBd1).